The chain runs to 279 residues: Phosphate import ATP-binding protein PstB 2 (279 aa).

Residues 34–274 (FDIENLDLYY…PSDDRTRGYV (241 aa)) form the ABC transporter domain. An ATP-binding site is contributed by 66–73 (GPSGCGKS).

It belongs to the ABC transporter superfamily. Phosphate importer (TC 3.A.1.7) family. As to quaternary structure, the complex is composed of two ATP-binding proteins (PstB), two transmembrane proteins (PstC and PstA) and a solute-binding protein (PstS).

It is found in the cell inner membrane. It catalyses the reaction phosphate(out) + ATP + H2O = ADP + 2 phosphate(in) + H(+). Part of the ABC transporter complex PstSACB involved in phosphate import. Responsible for energy coupling to the transport system. In Vibrio vulnificus (strain YJ016), this protein is Phosphate import ATP-binding protein PstB 2.